Reading from the N-terminus, the 510-residue chain is Cytochrome P450 52C2 (510 aa).

C458 contacts heme.

The protein belongs to the cytochrome P450 family. Heme serves as cofactor.

The protein localises to the membrane. Functionally, together with an NADPH cytochrome P450 the enzyme system catalyzes the terminal hydroxylation as the first step in the assimilation of alkanes and fatty acids. The chain is Cytochrome P450 52C2 (CYP52C2) from Candida maltosa (Yeast).